The primary structure comprises 111 residues: P antigen family member 2 (111 aa).

The disordered stretch occupies residues 1–66; the sequence is MSELLRARSQ…NQAVPAFQGP (66 aa). Residues 8–24 are compositionally biased toward polar residues; it reads RSQSSERGNDQESSQPV.

It belongs to the GAGE family.

In Homo sapiens (Human), this protein is P antigen family member 2 (PAGE2).